Here is a 130-residue protein sequence, read N- to C-terminus: Small ribosomal subunit protein uS8 (130 aa).

Belongs to the universal ribosomal protein uS8 family. In terms of assembly, part of the 30S ribosomal subunit. Contacts proteins S5 and S12.

One of the primary rRNA binding proteins, it binds directly to 16S rRNA central domain where it helps coordinate assembly of the platform of the 30S subunit. The sequence is that of Small ribosomal subunit protein uS8 from Mannheimia succiniciproducens (strain KCTC 0769BP / MBEL55E).